A 227-amino-acid chain; its full sequence is MTNNLSGYRNKFVRVKTSKKRTVSSSNWLRRQLNDPYVAKARMDGFRSRAAYKLLEIHEKFKLFTPNMKIVDLGAAPGGWSQVASKLIKASDNNLNNKIISIDVLEIEHVAGVEFVQKDFFEADTEELIIQALDGRADIVMSDMASNTIGHKATDHIRTLLLCEQAFEFALKVLKPSGHFIAKIFRGGAENELLYKVKREFKTVKHFKPSSSRSESTEIYLVALNKK.

Positions 78, 80, 103, 119, and 143 each coordinate S-adenosyl-L-methionine. The active-site Proton acceptor is the Lys-183.

It belongs to the class I-like SAM-binding methyltransferase superfamily. RNA methyltransferase RlmE family.

The protein localises to the cytoplasm. The catalysed reaction is uridine(2552) in 23S rRNA + S-adenosyl-L-methionine = 2'-O-methyluridine(2552) in 23S rRNA + S-adenosyl-L-homocysteine + H(+). Specifically methylates the uridine in position 2552 of 23S rRNA at the 2'-O position of the ribose in the fully assembled 50S ribosomal subunit. The protein is Ribosomal RNA large subunit methyltransferase E of Rickettsia africae (strain ESF-5).